Reading from the N-terminus, the 148-residue chain is Lysozyme C (148 aa).

Positions 1-18 are cleaved as a signal peptide; sequence MKAPLLLGLLLLSVTVQG. Positions 19-148 constitute a C-type lysozyme domain; it reads KVFERCDLAR…VSQYVRNCGV (130 aa). 4 disulfide bridges follow: Cys24–Cys146, Cys48–Cys134, Cys83–Cys99, and Cys95–Cys113. Active-site residues include Glu53 and Asp71.

This sequence belongs to the glycosyl hydrolase 22 family. In terms of assembly, monomer.

The protein resides in the secreted. It carries out the reaction Hydrolysis of (1-&gt;4)-beta-linkages between N-acetylmuramic acid and N-acetyl-D-glucosamine residues in a peptidoglycan and between N-acetyl-D-glucosamine residues in chitodextrins.. Lysozymes have primarily a bacteriolytic function; those in tissues and body fluids are associated with the monocyte-macrophage system and enhance the activity of immunoagents. The polypeptide is Lysozyme C (LYZ) (Leptonychotes weddellii (Weddell seal)).